A 560-amino-acid polypeptide reads, in one-letter code: MTSPESLSSRHIRQGRTYTTTDKVISRSSSYSSNSSMSKDYGDHTPLSVSSAASETLPSPQYMPIRTFNTMPTAGPTPLHLFQNDRGIFNHHSSSGSSKTASTNKRGIAAAVALATAATIPFPLKKQNQDDNSKVSVTHNESSKENKITPSMRAEDNKPKNGCICGSSDSKDELFIQCNKCKTWQHKLCYAFKKSDPIKRDFVCKRCDSDTKVQVNQVKPMIFPRKMGDERLFQFSSIVTTSASNTNQHQQSVNNIEEQPKKRQLHYTAPTTENSNSIRKKLRQEKLVVSSHFLKPLLNEVSSSNDTEFKAITISEYKDKYVKMFIDNHYDDDWVVCSNWESSRSADIEVRKSSNERDFGVFAADSCVKGELIQEYLGKIDFQKNYQTDPNNDYRLMGTTKPKVLFHPHWPLYIDSRETGGLTRYIRRSCEPNVELVTVRPLDEKPRGDNDCRVKFVLRAIRDIRKGEEISVEWQWDLRNPIWEIINASKDLDSLPDPDKFWLMGSIKTILTNCDCACGYLGHNCPITKIKNFSEEFMRNTKESLSNKSYFNTIMHNCKP.

2 disordered regions span residues 1–61 and 125–157; these read MTSP…PSPQ and KKQNQDDNSKVSVTHNESSKENKITPSMRAEDN. Residues 26–38 are compositionally biased toward low complexity; the sequence is SRSSSYSSNSSMS. Positions 47-59 are enriched in polar residues; the sequence is LSVSSAASETLPS. Positions 141 to 157 are enriched in basic and acidic residues; it reads ESSKENKITPSMRAEDN. The PHD-type zinc finger occupies 160 to 210; it reads KNGCICGSSDSKDELFIQCNKCKTWQHKLCYAFKKSDPIKRDFVCKRCDSD. An SET domain is found at 346–475; sequence ADIEVRKSSN…KGEEISVEWQ (130 aa).

Belongs to the SET3 family.

In terms of biological role, putative chromatin regulator. This Saccharomyces cerevisiae (strain ATCC 204508 / S288c) (Baker's yeast) protein is SET domain-containing protein 4 (SET4).